A 266-amino-acid polypeptide reads, in one-letter code: Large ribosomal subunit protein eL8 (266 aa).

The span at 1 to 11 shows a compositional bias: basic residues; sequence MPKGKKAKGKK. The disordered stretch occupies residues 1–21; the sequence is MPKGKKAKGKKVAPAPSVAKK.

It belongs to the eukaryotic ribosomal protein eL8 family. In terms of assembly, component of the large ribosomal subunit.

Its subcellular location is the cytoplasm. Functionally, component of the large ribosomal subunit. The ribosome is a large ribonucleoprotein complex responsible for the synthesis of proteins in the cell. The polypeptide is Large ribosomal subunit protein eL8 (rpl7a) (Ictalurus punctatus (Channel catfish)).